Consider the following 305-residue polypeptide: Oxygen-dependent coproporphyrinogen-III oxidase (305 aa).

Serine 92 is a binding site for substrate. The a divalent metal cation site is built by histidine 96 and histidine 106. The Proton donor role is filled by histidine 106. 108–110 (NVR) contributes to the substrate binding site. Histidine 145 and histidine 175 together coordinate a divalent metal cation. Positions 239–274 (YVEFNLLFDRGTLFGLQSGGRAESILISLPPLVRWE) are important for dimerization. Residue 257–259 (GGR) coordinates substrate.

Belongs to the aerobic coproporphyrinogen-III oxidase family. Homodimer. It depends on a divalent metal cation as a cofactor.

The protein localises to the cytoplasm. It catalyses the reaction coproporphyrinogen III + O2 + 2 H(+) = protoporphyrinogen IX + 2 CO2 + 2 H2O. It functions in the pathway porphyrin-containing compound metabolism; protoporphyrin-IX biosynthesis; protoporphyrinogen-IX from coproporphyrinogen-III (O2 route): step 1/1. In terms of biological role, involved in the heme biosynthesis. Catalyzes the aerobic oxidative decarboxylation of propionate groups of rings A and B of coproporphyrinogen-III to yield the vinyl groups in protoporphyrinogen-IX. In Xylella fastidiosa (strain M12), this protein is Oxygen-dependent coproporphyrinogen-III oxidase.